The chain runs to 528 residues: Adhesion G-protein coupled receptor G5 (528 aa).

Residues 1–21 (MDHCGALFLCLCLLTLQNATT) form the signal peptide. The Extracellular segment spans residues 22-245 (ETWEELLSYM…SPALVPAELL (224 aa)). 6 N-linked (GlcNAc...) asparagine glycosylation sites follow: asparagine 58, asparagine 65, asparagine 146, asparagine 147, asparagine 173, and asparagine 179. In terms of domain architecture, GAIN-B spans 78-239 (FKLSCDFSGL…AVLMQLSPAL (162 aa)). Intrachain disulfides connect cysteine 189-cysteine 221 and cysteine 209-cysteine 223. Residues 189–239 (CVFWKEGARKQPWGGWSPEGCRTEQPSHSQVLCRCNHLTYFAVLMQLSPAL) are GPS. A stachel region spans residues 228–236 (YFAVLMQLS). The helical transmembrane segment at 246–271 (APLTYISLVGCSISIVASLITVLLHF) threads the bilayer. The Cytoplasmic segment spans residues 272–280 (HFRKQSDSL). Residues 281 to 304 (TRIHMNLHASVLLLNIAFLLSPAF) traverse the membrane as a helical segment. The Extracellular segment spans residues 305–314 (AMSPVPGSAC). Cysteines 314 and 404 form a disulfide. The chain crosses the membrane as a helical span at residues 315–340 (TALAAALHYALLSCLTWMAIEGFNLY). The Cytoplasmic portion of the chain corresponds to 341–353 (LLLGRVYNIYIRR). Residues 354–377 (YVFKLGVLGWGAPALLVLLSLSVK) traverse the membrane as a helical segment. Residues 378 to 410 (SSVYGPCTIPVFDSWENGTGFQNMSICWVRSPV) lie on the Extracellular side of the membrane. 2 N-linked (GlcNAc...) asparagine glycosylation sites follow: asparagine 394 and asparagine 400. Residues 411 to 435 (VHSVLVMGYGGLTSLFNLVVLAWAL) traverse the membrane as a helical segment. Over 436 to 455 (WTLRRLRERADAPSVRACHD) the chain is Cytoplasmic. A helical membrane pass occupies residues 456 to 477 (TVTVLGLTVLLGTTWALAFFSF). At 478–481 (GVFL) the chain is on the extracellular side. The chain crosses the membrane as a helical span at residues 482-505 (LPQLFLFTILNSLYGFFLFLWFCS). The Cytoplasmic segment spans residues 506-528 (QRCRSEAEAKAQIEAFSSSQTTQ).

It belongs to the G-protein coupled receptor 2 family. Adhesion G-protein coupled receptor (ADGR) subfamily. As to quaternary structure, heterodimer of 2 chains generated by proteolytic processing; the large extracellular N-terminal fragment and the membrane-bound C-terminal fragment predominantly remain associated and non-covalently linked. In terms of processing, autoproteolytically processed at the GPS region of the GAIN-B domain; this cleavage modulates receptor activity. N-glycsylated. In terms of tissue distribution, expressed in immune cells. Primarily found in granulocytes. Found in eosinophils.

The protein localises to the cell membrane. Its activity is regulated as follows. Forms a heterodimer of 2 chains generated by proteolytic processing that remain associated through non-covalent interactions mediated by the GAIN-B domain. In the inactivated receptor, the Stachel sequence (also named stalk) is embedded in the GAIN-B domain, where it adopts a beta-strand conformation. On activation, the Stachel moves into the 7 transmembrane region and adopts a twisted hook-shaped configuration that forms contacts within the receptor, leading to coupling of a G-alpha protein, which activates signaling. The cleaved GAIN-B and N-terminal domains can then dissociate from the rest of the receptor. Orphan adhesion G-protein coupled receptor (aGPCR). Ligand binding causes a conformation change that triggers signaling via guanine nucleotide-binding proteins (G proteins) and modulates the activity of downstream effectors, such as adenylate cyclase. ADGRG5 is specifically coupled to G(s) G proteins and mediates activation of adenylate cyclase activity. The chain is Adhesion G-protein coupled receptor G5 from Homo sapiens (Human).